We begin with the raw amino-acid sequence, 136 residues long: MTLNLSVLTPNRIIWDSEVKEIILVTNSGQIGVLPDHAPIATAVDIGILKIRLTPNDGWLTMALMGGFARIGNNEVTILVNDAEKASDIDPQEAQQTLEIAEANLRKAQGKRQTIEANLALRRARTRVEAINGVPS.

The protein belongs to the ATPase epsilon chain family. In terms of assembly, F-type ATPases have 2 components, CF(1) - the catalytic core - and CF(0) - the membrane proton channel. CF(1) has five subunits: alpha(3), beta(3), gamma(1), delta(1), epsilon(1). CF(0) has three main subunits: a, b and c.

Its subcellular location is the plastid. The protein resides in the chloroplast thylakoid membrane. Produces ATP from ADP in the presence of a proton gradient across the membrane. This is ATP synthase epsilon chain, chloroplastic from Cucumis sativus (Cucumber).